The chain runs to 153 residues: Natriuretic peptides A (153 aa).

An N-terminal signal peptide occupies residues 1–25 (MGSFSTITASFLLFLACQLLWQTGA). Propeptides lie at residues 26 to 123 (NPVY…AAPR) and 93 to 103 (DGGALGRGSWD). The interval 62-104 (VLSEQNEEAGAALSPLPEVPPWAGEVNPAQRDGGALGRGSWDS) is disordered. A Phosphoserine modification is found at S129. C130 and C146 are disulfide-bonded. The segment at 147-151 (NSFRY) is important for degradation of atrial natriuretic peptide by IDE.

Belongs to the natriuretic peptide family. Homodimer; disulfide-linked antiparallel dimer. Post-translationally, the precursor molecule is proteolytically cleaved by CORIN at Arg-123 to produce the atrial natriuretic peptide. Undergoes further proteolytic cleavage by unknown proteases to give rise to long-acting natriuretic peptide, vessel dilator and kaliuretic peptide. Additional processing gives rise to the auriculin and atriopeptin peptides. In the kidneys, alternative processing by an unknown protease results in the peptide urodilatin. In terms of processing, cleavage by MME initiates degradation of the factor and thereby regulates its activity. Degradation by IDE results in reduced activation of NPR1 (in vitro). During IDE degradation, the resulting products can temporarily stimulate NPR2 to produce cGMP, before the fragments are completely degraded and inactivated by IDE (in vitro). Degraded by IDE. Post-translationally, phosphorylation on Ser-129 decreases vasorelaxant activity.

The protein localises to the secreted. Its subcellular location is the perikaryon. The protein resides in the cell projection. Its function is as follows. Hormone that plays a key role in mediating cardio-renal homeostasis, and is involved in vascular remodeling and regulating energy metabolism. Acts by specifically binding and stimulating NPR1 to produce cGMP, which in turn activates effector proteins, such as PRKG1, that drive various biological responses. Regulates vasodilation, natriuresis, diuresis and aldosterone synthesis and is therefore essential for regulating blood pressure, controlling the extracellular fluid volume and maintaining the fluid-electrolyte balance. Also involved in inhibiting cardiac remodeling and cardiac hypertrophy by inducing cardiomyocyte apoptosis and attenuating the growth of cardiomyocytes and fibroblasts. Plays a role in female pregnancy by promoting trophoblast invasion and spiral artery remodeling in uterus, and thus prevents pregnancy-induced hypertension. In adipose tissue, acts in various cGMP- and PKG-dependent pathways to regulate lipid metabolism and energy homeostasis. This includes up-regulating lipid metabolism and mitochondrial oxygen utilization by activating the AMP-activated protein kinase (AMPK), and increasing energy expenditure by acting via MAPK11 to promote the UCP1-dependent thermogenesis of brown adipose tissue. Binds the clearance receptor NPR3 which removes the hormone from circulation. In terms of biological role, may have a role in cardio-renal homeostasis through regulation of natriuresis, diuresis, vasodilation, and inhibiting aldosterone synthesis. In vitro, promotes the production of cGMP and induces vasodilation. May promote natriuresis, at least in part, by enhancing prostaglandin E2 synthesis resulting in the inhibition of renal Na+-K+-ATPase. However reports on the involvement of this peptide in mammal blood volume and blood pressure homeostasis are conflicting; according to a report, in vivo it is not sufficient to activate cGMP and does not inhibit collecting duct transport nor effect diuresis and natriuresis. Appears to bind to specific receptors that are distinct from the receptors bound by atrial natriuretic peptide and vessel dilator. Possibly enhances protein excretion in urine by decreasing proximal tubular protein reabsorption. May have a role in cardio-renal homeostasis through regulation of natriuresis, diuresis, and vasodilation. In vitro, promotes the production of cGMP and induces vasodilation. May promote natriuresis, at least in part, by enhancing prostaglandin E2 synthesis resulting in the inhibition of renal Na+-K+-ATPase. However reports on the involvement of this peptide in mammal blood volume and blood pressure homeostasis are conflicting; according to a report it is not sufficient to activate cGMP and does not inhibit collecting duct transport nor effect diuresis and natriuresis. Appears to bind to specific receptors that are distinct from the receptors bound by the atrial natriuretic and long-acting natriuretic peptides. Possibly functions in protein excretion in urine by maintaining the integrity of the proximal tubules and enhancing protein excretion by decreasing proximal tubular protein reabsorption. Functionally, may have a role in cardio-renal homeostasis through regulation of diuresis and inhibiting aldosterone synthesis. In vitro, promotes the production of cGMP and induces vasodilation. May promote natriuresis, at least in part, by enhancing prostaglandin E2 synthesis resulting in the inhibition of renal Na+-K+-ATPase. May have a role in potassium excretion but not sodium excretion (natriuresis). Possibly enhances protein excretion in urine by decreasing proximal tubular protein reabsorption. Its function is as follows. Hormone produced in the kidneys that appears to be important for maintaining cardio-renal homeostasis. Mediates vasodilation, natriuresis and diuresis primarily in the renal system, in order to maintain the extracellular fluid volume and control the fluid-electrolyte balance. Specifically binds and stimulates cGMP production by renal transmembrane receptors, likely NPR1. Urodilatin not ANP, may be the natriuretic peptide responsible for the regulation of sodium and water homeostasis in the kidney. In terms of biological role, may have a role in cardio-renal homeostasis through regulation of natriuresis and vasodilation. In vivo promotes natriuresis and in vitro, vasodilates renal artery strips. May have a role in cardio-renal homeostasis through regulation of regulation of natriuresis and vasodilation. In vivo promotes natriuresis. In vitro, vasodilates intestinal smooth muscle but not smooth muscle strips. Functionally, may have a role in cardio-renal homeostasis through regulation of natriuresis and vasodilation. In vivo promotes natriuresis. In vitro, selectively vasodilates intestinal and vascular smooth muscle strips. Its function is as follows. May have a role in cardio-renal homeostasis through regulation of natriuresis and vasodilation. In vivo promotes natriuresis. In vitro, selectively vasodilates intestinal smooth muscle but not vascular smooth muscle strips. The polypeptide is Natriuretic peptides A (NPPA) (Felis catus (Cat)).